The primary structure comprises 130 residues: Large ribosomal subunit protein eL34 (130 aa).

The disordered stretch occupies residues 111 to 130 (KPVSKPPKIQKTAKAASKSK).

The protein belongs to the eukaryotic ribosomal protein eL34 family.

The polypeptide is Large ribosomal subunit protein eL34 (RpL34) (Aedes albopictus (Asian tiger mosquito)).